The sequence spans 496 residues: Cobyric acid synthase (496 aa).

Residues 256-444 (KINIAVVLLR…IHGILDNQAF (189 aa)) form the GATase cobBQ-type domain. The active-site Nucleophile is Cys337. The active site involves His436.

Belongs to the CobB/CobQ family. CobQ subfamily.

The protein operates within cofactor biosynthesis; adenosylcobalamin biosynthesis. In terms of biological role, catalyzes amidations at positions B, D, E, and G on adenosylcobyrinic A,C-diamide. NH(2) groups are provided by glutamine, and one molecule of ATP is hydrogenolyzed for each amidation. The chain is Cobyric acid synthase from Phocaeicola vulgatus (strain ATCC 8482 / DSM 1447 / JCM 5826 / CCUG 4940 / NBRC 14291 / NCTC 11154) (Bacteroides vulgatus).